We begin with the raw amino-acid sequence, 146 residues long: UPF0735 ACT domain-containing protein CHY_1913 (146 aa).

The region spanning Thr-70 to Gln-145 is the ACT domain.

It belongs to the UPF0735 family.

This Carboxydothermus hydrogenoformans (strain ATCC BAA-161 / DSM 6008 / Z-2901) protein is UPF0735 ACT domain-containing protein CHY_1913.